Here is a 239-residue protein sequence, read N- to C-terminus: Adenylate kinase 2 (239 aa).

29–34 (GSGKGT) is an ATP binding site. The segment at 49–78 (STGDILRAIIASGSELGQKVQKITESGGLV) is NMP. AMP-binding positions include Thr-50, Arg-55, 76–78 (GLV), 104–107 (GFPR), and Gln-111. The LID stretch occupies residues 145 to 182 (GRLFHLASGRSYHELFNPPKVPMVDDITGDRLVHRSDD). ATP is bound by residues Arg-146 and 155–156 (SY). Residues Arg-179 and Arg-190 each contribute to the AMP site.

It belongs to the adenylate kinase family. AK2 subfamily. In terms of assembly, monomer. Requires Mg(2+) as cofactor.

The protein localises to the cytoplasm. Its subcellular location is the cytosol. It catalyses the reaction AMP + ATP = 2 ADP. The protein operates within purine metabolism; purine nucleotide biosynthesis. Functionally, catalyzes the reversible transfer of the terminal phosphate group between ATP and AMP. Plays an important role in cellular energy homeostasis and in adenine nucleotide metabolism. This chain is Adenylate kinase 2, found in Schistosoma mansoni (Blood fluke).